A 156-amino-acid polypeptide reads, in one-letter code: Ribosomal RNA large subunit methyltransferase H (156 aa).

S-adenosyl-L-methionine-binding positions include Leu73, Gly104, and Leu123–Leu128.

This sequence belongs to the RNA methyltransferase RlmH family. Homodimer.

It localises to the cytoplasm. The enzyme catalyses pseudouridine(1915) in 23S rRNA + S-adenosyl-L-methionine = N(3)-methylpseudouridine(1915) in 23S rRNA + S-adenosyl-L-homocysteine + H(+). Specifically methylates the pseudouridine at position 1915 (m3Psi1915) in 23S rRNA. In Aliivibrio salmonicida (strain LFI1238) (Vibrio salmonicida (strain LFI1238)), this protein is Ribosomal RNA large subunit methyltransferase H.